The sequence spans 419 residues: O-methyltransferase gsfB (419 aa).

S-adenosyl-L-methionine is bound by residues 255–256, Asp278, 300–301, and Arg316; these read GG and DF. The active-site Proton acceptor is His320.

Belongs to the class I-like SAM-binding methyltransferase superfamily. Cation-independent O-methyltransferase family.

The enzyme catalyses 2-(2,4-dihydroxy-6-oxidobenzoyl)-5-hydroxy-3-methylbenzenolate + S-adenosyl-L-methionine = griseophenone D + S-adenosyl-L-homocysteine + H(+). The protein operates within secondary metabolite biosynthesis; terpenoid biosynthesis. O-methyltransferase; part of the gene cluster that mediates the biosynthesis of griseofulvin, an important antifungal drug that has been in use for a long time for treating dermatophyte infections. The first step of the pathway is the formation of the heptaketide backbone by gsfA which is initiated by priming with acetyl-CoA, followed by sequential condensations of 6 malonyl-CoA units. The resulting benzophenone can undergo a spontaneous dehydration to form norlichexanthone. However, the true precursor for the griseofulvin biosynthesis is not norlichexanthone, but the heptaketide benzophenone that is O-methylated at 3-OH by gsfB to produce griseophenone D which is further methylated at 9-OH by gsfC to yield griseophenone C. Griseophenone C is then substrate of halogenase gsfI which is responsible for the regio-specific chlorination at the C13 position to form griseophenone B. The cytochrome P450 gsfF catalyzes the coupling of orcinol and phloroglucinol rings in griseophenone B to form desmethyl-dehydrogriseofulvin A which is further methylated at 5-OH by gsfD to yield dehydrogriseofulvin. Finally, gsfE performs stereospecific reduction of enone 18 of dehydrogriseofulvin to afford the final product griseofulvin. The polypeptide is O-methyltransferase gsfB (Penicillium aethiopicum).